The following is a 116-amino-acid chain: MSYISGARSLPDEQVRIASTKMDGIGPKKAIQLRYRLGISGNIKMNELTKYQIDQIEQMIAQDHVVHWELKRGERADIERLISISRYRGIRHQDGSPLRGQRTHTNARTARKQIRK.

The tract at residues 92–116 (HQDGSPLRGQRTHTNARTARKQIRK) is disordered.

This sequence belongs to the universal ribosomal protein uS13 family. Part of the small ribosomal subunit.

The protein localises to the mitochondrion. Located at the top of the head of the small subunit, it contacts several helices of the 18S rRNA. This chain is Small ribosomal subunit protein uS13m (RPS13), found in Triticum aestivum (Wheat).